The following is a 260-amino-acid chain: Global transcriptional regulator CodY (260 aa).

A GAF domain region spans residues 1 to 159; that stretch reads MPNLLEKTRK…SSTVVGIQLL (159 aa). Positions 207-226 form a DNA-binding region, H-T-H motif; it reads ASVIADRIGITRSVIVNALR.

This sequence belongs to the CodY family.

It is found in the cytoplasm. In terms of biological role, DNA-binding global transcriptional regulator which is involved in the adaptive response to starvation and acts by directly or indirectly controlling the expression of numerous genes in response to nutrient availability. During rapid exponential growth, CodY is highly active and represses genes whose products allow adaptation to nutrient depletion. This chain is Global transcriptional regulator CodY, found in Streptococcus equi subsp. equi (strain 4047).